The sequence spans 454 residues: Pyrimidine/purine nucleotide 5'-monophosphate nucleosidase (454 aa).

This sequence belongs to the LOG family.

It carries out the reaction a pyrimidine ribonucleoside 5'-phosphate + H2O = a pyrimidine nucleobase + D-ribose 5-phosphate. It catalyses the reaction AMP + H2O = adenine + D-ribose 5-phosphate. The catalysed reaction is GMP + H2O = guanine + D-ribose 5-phosphate. The enzyme catalyses CMP + H2O = cytosine + D-ribose 5-phosphate. It carries out the reaction IMP + H2O = hypoxanthine + D-ribose 5-phosphate. It catalyses the reaction UMP + H2O = D-ribose 5-phosphate + uracil. The catalysed reaction is dTMP + H2O = 2-deoxy-D-ribose 5-phosphate + thymine. Its function is as follows. Catalyzes the hydrolysis of the N-glycosidic bond of diverse pyrimidine and purine nucleotide 5'-monophosphates, to form ribose 5-phosphate and the corresponding free base. Can use AMP, GMP, IMP, CMP, dTMP and UMP as substrates. Cannot catalyze the reverse reactions. May contribute to nucleoside pool homeostasis by degrading excess nucleotides and feeding back the ribose moiety to catabolism. This Escherichia coli O157:H7 protein is Pyrimidine/purine nucleotide 5'-monophosphate nucleosidase.